The primary structure comprises 817 residues: V-type proton ATPase subunit a1 (817 aa).

Over 1–422 the chain is Cytoplasmic; it reads MEEFLDKLPQ…PAVYSVVTYP (422 aa). The stretch at 97-133 forms a coiled coil; the sequence is DIALGDLERQLADHEHEVLEMNSNSEKLRQTYNELLE. A helical transmembrane segment spans residues 423–443; it reads FLFAVMFGDWGHGLCLLLGAL. Residues 444–468 lie on the Vacuolar side of the membrane; that stretch reads YLLARERKLSTQKLGSFMEMLFGGR. A helical membrane pass occupies residues 469–489; it reads YVILLMALFSIYCGLIYNEFF. At 490-547 the chain is on the cytoplasmic side; it reads SVPFHIFGGSAYKCRDTTCSDAYTVGLIKYRDPYPFGVDPSWRGSRTELPYLNSLKMK. The chain crosses the membrane as a helical span at residues 548 to 568; sequence MSILLGIAQMNLGLILSFFNA. The Vacuolar segment spans residues 569–580; sequence RFFGSSLDIRYQ. The helical transmembrane segment at 581 to 601 threads the bilayer; it reads FIPQMIFLNSLFGYLSLLIII. At 602-639 the chain is on the cytoplasmic side; it reads KWCTGSQADLYHVMIYMFLSPTEELGENELFWGQRPLQ. Residues 640–660 form a helical membrane-spanning segment; sequence IVLLLLAFIAVPWMLFPKPFA. Residues 661–758 are Vacuolar-facing; that stretch reads LRKIHMERFQ…VLLLAWGYEN (98 aa). Residues 759–779 form a helical membrane-spanning segment; that stretch reads ILIRLIGVAVFAFATAFILLM. Residues 780–817 are Cytoplasmic-facing; it reads METLSAFLHALRLHWVEFMGKFFNGDGYKFKPFSFALI.

Belongs to the V-ATPase 116 kDa subunit family. As to quaternary structure, V-ATPase is a heteromultimeric enzyme composed of a peripheral catalytic V1 complex (components A to H) attached to an integral membrane V0 proton pore complex (components: a, c, c'', d and e).

It is found in the vacuole membrane. The protein resides in the golgi apparatus. The protein localises to the trans-Golgi network membrane. In terms of biological role, essential component of the vacuolar proton pump (V-ATPase), a multimeric enzyme that catalyzes the translocation of protons across the membranes. Required for assembly and activity of the V-ATPase. Required during cell expansion. This chain is V-type proton ATPase subunit a1, found in Arabidopsis thaliana (Mouse-ear cress).